The chain runs to 889 residues: F-BAR domain only protein 1 (889 aa).

An F-BAR domain is found at 1–248 (MSYFGEHFWG…NIENVSVEML (248 aa)). A mediates membrane-binding region spans residues 1 to 275 (MSYFGEHFWG…LDFEAYSAAA (275 aa)). Residues 156–195 (TSQKEMDKAETKTKKAAESLRRSVEKYNSARADFEQKMLD) adopt a coiled-coil conformation. The interval 267–442 (DFEAYSAAAL…KNLFGPPLES (176 aa)) is mediates interaction with the adaptor protein complex AP-2. The disordered stretch occupies residues 294–352 (LSRREREPEPPAAVDFLEPDSGTCPEVDEEGFTVRPDVTQNSTAEPSRFSSSDSDFDDE). A phosphoserine mark is found at Ser295, Ser347, and Ser372. A disordered region spans residues 382-596 (ATAGSLILPP…SPLGSSAAST (215 aa)). Positions 450 to 469 (TGSSSLGFTSSPSPFSSSSP) are enriched in low complexity. The segment covering 496–511 (PGTPQSPPSCRAPPPE) has biased composition (pro residues). Ser530 carries the phosphoserine modification. Residues 580–596 (LSRSLSPSPLGSSAAST) show a composition bias toward low complexity. The tract at residues 609–889 (HGVSRGPSPV…FATGMYLVSC (281 aa)) is mediates interaction with AGFG1, CALM, DAB2, EPS15, EPS15R, ITSN1 and clathrin. Ser616 bears the Phosphoserine mark. In terms of domain architecture, MHD spans 625–888 (ALPIATAFTE…RFATGMYLVS (264 aa)). Positions 826–849 (AGGSGRLSASWEPLSGPSTPSPVA) are disordered.

The protein belongs to the FCHO family. In terms of assembly, may oligomerize and form homotetramer. Interacts with AP2A2 and AP2B1; 2 subunits of the adaptor protein complex AP-2. Interacts with DAB2. Interacts with clathrin (CLTC or CLTCL1). Interacts with EPS15, EPS15R and ITSN1. Interacts with AGFG1 and CALM. May interact with ACVR1; linking this receptor to clathrin-mediated endocytosis. Predominantly expressed in lymphoid cells.

The protein localises to the membrane. The protein resides in the clathrin-coated pit. Functionally, functions in an early step of clathrin-mediated endocytosis. Has both a membrane binding/bending activity and the ability to recruit proteins essential to the formation of functional clathrin-coated pits. May regulate Bmp signaling by regulating clathrin-mediated endocytosis of Bmp receptors. Involved in the regulation of T-cell poliferation and activation. Affects TCR clustering upon receptor triggering and modulates its internalisation, playing a role in TCR-dependent T-cell activation. The protein is F-BAR domain only protein 1 of Homo sapiens (Human).